The following is a 227-amino-acid chain: Max dimerization protein 1 (227 aa).

The Nuclear localization signal signature appears at 21–48; it reads RREREAEHGYASMLPYSKDRDAFKRRNK. 3 disordered regions span residues 30 to 66, 142 to 161, and 184 to 227; these read YASM…MEKN, MDSV…REEL, and GWSS…GLGL. The 53-residue stretch at 55-107 folds into the bHLH domain; that stretch reads SSRSTHNEMEKNRRAHLRLCLEKLKGLVPLGPESSRHTTLSLLTKAKLHIKKL. Positions 198–211 are enriched in polar residues; sequence MQSLGSDEGYSSAT. Residues 216–227 are compositionally biased toward basic and acidic residues; the sequence is KLQDGHKAGLGL.

As to quaternary structure, heterodimer with MAX; the interaction is required for DNA-binding. DNA binding requires dimerization with another bHLH protein; does not form homodimers, and does not bind to DNA in the absence of MAX in vitro. Interacts with RNF17. Post-translationally, ubiquitinated by BIRC2/c-IAP1, leading to its subsequent degradation by the proteasome.

It is found in the nucleus. In terms of biological role, component of a transcriptional repressor complex together with MAX. In complex with MAX binds to the core DNA sequence 5'-CAC[GA]TG-3'. Antagonizes MYC transcriptional activity by competing with MYC for MAX binding. Binds to the TERT promoter and represses telomerase expression, possibly by interfering with MYC binding. This Mus musculus (Mouse) protein is Max dimerization protein 1 (Mxd1).